We begin with the raw amino-acid sequence, 469 residues long: Lactonohydrolase oryH (469 aa).

The signal sequence occupies residues 1–20; it reads MYLSLRLVSLALCIAPLASA.

The protein belongs to the SMP-30/CGR1 family.

Its pathway is secondary metabolite biosynthesis. Functionally, lactonohydrolase; part of the gene cluster that mediates the biosynthesis of oryzines, natural products with an unusual maleidride backbone. The two subunits of the fungal fatty acid synthase oryfasA and oryfasB probably form octenoic acid. This fatty acid is most likely activated by the acyl-CoA ligase oryP to give octenyl-CoA before the citrate synthase-like protein oryE catalyzes condensation with oxaloacetate to form tricarboxylic acid. The next steps of the pathways are conjectural, but a favorite possible route has been proposed, beginning with decarboxylation and concomitant dehydration by the decarboxylase oryM, followed by tautomerization, which may lead to the production of a diene intermediate. Reduction of this diene intermediate could give the known metabolite piliformic acid. On the pathway to oryzine B and oryzine A, however, hydroxylation of the diene by the alpha-ketoglutarate-dependent dioxygenase oryG and lactonisation by the lactonohydrolases oryH or oryL could give oryzine B directly. Finally, enoyl reduction by the dehydrogenase oryD would then convert oryzine B into oryzine A. The protein is Lactonohydrolase oryH of Aspergillus oryzae (strain ATCC 42149 / RIB 40) (Yellow koji mold).